The primary structure comprises 184 residues: Large ribosomal subunit protein uL22 (184 aa).

It belongs to the universal ribosomal protein uL22 family.

The sequence is that of Large ribosomal subunit protein uL22 (RPL17) from Yarrowia lipolytica (strain CLIB 122 / E 150) (Yeast).